The sequence spans 658 residues: Putative phospholipase B-like lamina ancestor (658 aa).

The first 29 residues, 1 to 29 (MLKVVGASWQKTRIGTYILIGAGLLVIGA), serve as a signal peptide directing secretion. Asparagine 229, asparagine 465, and asparagine 486 each carry an N-linked (GlcNAc...) asparagine glycan.

The protein belongs to the phospholipase B-like family. In terms of tissue distribution, expressed in neural and glial progenitors prior to, but not after, differentiation. Not expressed in late third instar disks, but is expressed uniformly by early third instar disks, in the imaginal ring of the proventriculus and in the salivary gland.

It localises to the secreted. Its function is as follows. Putative phospholipase. Involved in the regulation of cellular plasticity in imaginal disks. This is Putative phospholipase B-like lamina ancestor (lama) from Drosophila melanogaster (Fruit fly).